The sequence spans 239 residues: Peroxygenase (239 aa).

Gly2 is modified (N-acetylglycine). The EF-hand domain maps to 60 to 95 (HNMSVLQQRAAFFDRNNDGIVYPWETYQGFRAVGFG). Positions 73, 75, 77, and 84 each coordinate Ca(2+). Positions 116 to 125 (PSWIPSPVLS) match the Proline-knot motif.

Belongs to the caleosin family. In terms of assembly, homodimer. Requires heme b as cofactor. Ca(2+) serves as cofactor. As to expression, expressed in pollen (at protein level). Not expressed in leaf, root, stem, tepal, ovary, style, filament or stigma (at protein level).

The protein localises to the lipid droplet. The protein resides in the microsome membrane. The catalysed reaction is RH + ROOH = ROH + ROH.. Its function is as follows. Calcium-binding peroxygenase involved in the degradation of storage lipid in oil bodies. In Lilium longiflorum (Trumpet lily), this protein is Peroxygenase.